We begin with the raw amino-acid sequence, 1138 residues long: Solute carrier family 12 member 5 (1138 aa).

Disordered regions lie at residues 1 to 62 (MSRR…KGRE) and 96 to 116 (QGSR…KPVQ). Over 1–98 (MSRRFTVTSL…ANYTNLPQGS (98 aa)) the chain is Cytoplasmic. Residues 21–45 (PESRRHSVADPRRLPREDVKGDGNP) show a composition bias toward basic and acidic residues. The segment covering 46 to 55 (KESSPFINST) has biased composition (polar residues). The residue at position 57 (Thr57) is a Phosphothreonine. Basic and acidic residues predominate over residues 98–111 (SREHEEAENNEGGK). Residues 99–120 (REHEEAENNEGGKKKPVQAPRM) form a discontinuously helical membrane-spanning segment. Lys113 provides a ligand contact to K(+). Topologically, residues 121 to 129 (GTFMGVYLP) are extracellular. The helical transmembrane segment at 130–151 (CLQNIFGVILFLRLTWVVGIAG) threads the bilayer. Residues 152-174 (IMESFCMVFICCSCTMLTAISMS) lie on the Cytoplasmic side of the membrane. A helical transmembrane segment spans residues 175-203 (AIATNGVVPAGGSYYMISRSLGPEFGGAV). Ala184 is a binding site for chloride. Residues 204–229 (GLCFYLGTTFAGAMYILGTIEILLAY) are Extracellular-facing. The next 2 membrane-spanning stretches (helical) occupy residues 230-250 (LFPA…AAML) and 251-276 (NNMR…KYVN). Residues 277-402 (KFALVFLGCV…ERRGMPSVGL (126 aa)) lie on the Extracellular side of the membrane. A disulfide bond links Cys310 and Cys325. 4 N-linked (GlcNAc...) asparagine glycosylation sites follow: Asn314, Asn333, Asn351, and Asn362. The cysteines at positions 345 and 354 are disulfide-linked. A helical transmembrane segment spans residues 403–420 (ADGTPVDMDHPYVFSDMT). Met410 is a binding site for K(+). Chloride contacts are provided by Tyr414 and Val415. Topologically, residues 421–429 (SYFTLLVGI) are cytoplasmic. A helical transmembrane segment spans residues 430 to 453 (YFPSVTGIMAGSNRSGDLRDAQKS). Asp446 contacts K(+). Residues 454-485 (IPTGTILAIATTSAVYISSVVLFGACIEGVVL) are Extracellular-facing. Residues 486 to 513 (RDKFGEAVNGNLVVGTLAWPSPWVIVIG) form a helical membrane-spanning segment. Residues 514 to 534 (SFFSTCGAGLQSLTGAPRLLQ) are Cytoplasmic-facing. Helical transmembrane passes span 535–555 (AISR…KANG) and 556–578 (EPTW…ASLD). Glu569 lines the chloride pocket. Residues 579–592 (EVAPILSMFFLMCY) lie on the Cytoplasmic side of the membrane. The next 2 helical transmembrane spans lie at 593–615 (MFVN…PRFR) and 616–632 (YYHW…CLAL). At 633–1138 (MFICSWYYAL…GGREVITIYS (506 aa)) the chain is on the cytoplasmic side. The interval 667–681 (GIRGLSLSAARYALL) is scissor helix. Thr929 carries the phosphothreonine; by OXSR1 and STK39 modification. The segment at 943–1051 (HLTKNERERE…GPSPVSSEGI (109 aa)) is disordered. A compositionally biased stretch (basic and acidic residues) spans 945–962 (TKNEREREIQSITDESRG). Residues 982–994 (TACDNEEKPEEEV) show a composition bias toward acidic residues. Residues 1001–1012 (SAPSCPSSSPSP) show a composition bias toward low complexity. A compositionally biased stretch (basic and acidic residues) spans 1019–1041 (ERETDPEVHLTWTKDKSVAEKNK). Residue Thr1029 is modified to Phosphothreonine; by OXSR1 and STK39. A phosphoserine mark is found at Ser1044, Ser1047, and Ser1048.

It belongs to the SLC12A transporter family. K/Cl co-transporter subfamily. In terms of assembly, homodimer; adopts a domain-swap conformation at the scissor helices connecting the transmembrane domain and C-terminal domain. Heterodimer with K-Cl cotransporters SLC12A6 and SLC12A7. Interacts with AP2A1. Post-translationally, phosphorylated at Thr-929 and Thr-1029 by OXSR1/OSR1 and STK39/SPAK downstream of WNK kinases (WNK1, WNK2, WNK3 or WNK4), inhibiting the potassium-chloride cotransport activity. Expressed in brainstem, spinal cord and olfactory bulb of 17 dpc embryos. Expressed in all parts of the brain and spinal cord in postnatal day 14 mice. As to expression, expressed in brainstem and spinal cord of 17 dpc embryos. Expressed in all parts of the brain and spinal cord in postnatal day 14 mice.

The protein localises to the cell membrane. It is found in the cell projection. It localises to the dendrite. It catalyses the reaction K(+)(in) + chloride(in) = K(+)(out) + chloride(out). Inhibited following phosphorylation by OXSR1/OSR1 and STK39/SPAK: phosphorylation takes place downstream of WNK kinases (WNK1, WNK2, WNK3 or WNK4) in response to hyperosmotic stress and subsequent cell shrinkage. Mediates electroneutral potassium-chloride cotransport in mature neurons and is required for neuronal Cl(-) homeostasis. As major extruder of intracellular chloride, it establishes the low neuronal Cl(-) levels required for chloride influx after binding of GABA-A and glycine to their receptors, with subsequent hyperpolarization and neuronal inhibition. Involved in the regulation of dendritic spine formation and maturation. This is Solute carrier family 12 member 5 (Slc12a5) from Mus musculus (Mouse).